A 486-amino-acid chain; its full sequence is Elastin-binding protein EbpS (486 aa).

Residues 1 to 40 (MSNNFKDDFEKNRQSIDTNSHQDHTEDVEKDQSELEHQDT) are compositionally biased toward basic and acidic residues. Residues 1–314 (MSNNFKDDFE…NHDRDKERKK (314 aa)) are disordered. At 2–204 (SNNFKDDFEK…ESKDHHSGKK (203 aa)) the chain is on the extracellular side. Positions 14–34 (QSIDTNSHQDHTEDVEKDQSE) are elastin-binding. Polar residues predominate over residues 64-85 (TNHNKQVHNESQTSEDNVQNEA). 2 stretches are compositionally biased toward basic and acidic residues: residues 103 to 118 (EPSH…EEYY) and 126 to 149 (DKSH…ENNT). A compositionally biased stretch (polar residues) spans 150–166 (EHSTVSDKSIAEQSQQP). A compositionally biased stretch (basic and acidic residues) spans 180 to 199 (SKDKHDDVTVKQDKDESKDH). Low complexity-rich tracts occupy residues 204–225 (KGAA…MGVS) and 233–246 (DAQN…SNNS). Residues 205–225 (GAAIGAGTAGVAGAAGAMGVS) traverse the membrane as a helical segment. Over 226–319 (KAKKHSNDAQ…KERKKGGMAK (94 aa)) the chain is Cytoplasmic. Basic and acidic residues predominate over residues 247–259 (TEDKASQDKSKDH). Low complexity predominate over residues 278–297 (GAASKSASAASKPHASNNAS). Basic and acidic residues predominate over residues 299–314 (NHDEHDNHDRDKERKK). A helical membrane pass occupies residues 320–340 (VLLPLIAAVLIIGALAIFGGM). The Extracellular portion of the chain corresponds to 341 to 486 (ALNNHNNGTK…IRNGQQIVIP (146 aa)). The segment at 351 to 440 (ENKIANTNKN…QRQGGGQRHT (90 aa)) is disordered. Over residues 361–398 (NADESKDKDTSKDASKDKSKSTDSDKSKEDQDKATKDE) the composition is skewed to basic and acidic residues. A compositionally biased stretch (low complexity) spans 403 to 431 (QNNANQANNQAQNNQNQQQANQNQQQQQQ). Positions 437–485 (QRHTVNGQENLYRIAIQYYGSGSPENVEKIRRANGLSGNNIRNGQQIVI) constitute a LysM domain.

It localises to the cell membrane. Promotes binding of soluble elastin peptides and tropoelastin to S.aureus cells although it is not able to promote bacterial adherence to immobilized elastin and, therefore, is not a microbial surface component recognizing adhesive matrix molecule (MSCRAMM). This is Elastin-binding protein EbpS (ebpS) from Staphylococcus aureus (strain Mu50 / ATCC 700699).